The chain runs to 201 residues: LexA repressor (201 aa).

Positions 28-48 form a DNA-binding region, H-T-H motif; that stretch reads MRDIAAHLRISGTLGVSKHLT. Active-site for autocatalytic cleavage activity residues include Ser-120 and Lys-157.

It belongs to the peptidase S24 family. In terms of assembly, homodimer.

It carries out the reaction Hydrolysis of Ala-|-Gly bond in repressor LexA.. Its function is as follows. Represses a number of genes involved in the response to DNA damage (SOS response), including recA and lexA. In the presence of single-stranded DNA, RecA interacts with LexA causing an autocatalytic cleavage which disrupts the DNA-binding part of LexA, leading to derepression of the SOS regulon and eventually DNA repair. In Geobacter metallireducens (strain ATCC 53774 / DSM 7210 / GS-15), this protein is LexA repressor.